The chain runs to 376 residues: Protein-glutamate methylesterase/protein-glutamine glutaminase 1 (376 aa).

The region spanning 4-121 (KVLVVDDSSF…ARNRDEAVSL (118 aa)) is the Response regulatory domain. A 4-aspartylphosphate modification is found at Asp55. The interval 138 to 169 (RPVASSTPVQERPQSTLNRPTTGLRREASAQA) is disordered. A compositionally biased stretch (polar residues) spans 141-158 (ASSTPVQERPQSTLNRPT). In terms of domain architecture, CheB-type methylesterase spans 183–376 (SGKKYQLTAI…ERMLVEVGLA (194 aa)). Catalysis depends on residues Ser195, His222, and Asp318.

Belongs to the CheB family. In terms of processing, phosphorylated by CheA. Phosphorylation of the N-terminal regulatory domain activates the methylesterase activity.

It localises to the cytoplasm. The catalysed reaction is [protein]-L-glutamate 5-O-methyl ester + H2O = L-glutamyl-[protein] + methanol + H(+). It catalyses the reaction L-glutaminyl-[protein] + H2O = L-glutamyl-[protein] + NH4(+). In terms of biological role, involved in chemotaxis. Part of a chemotaxis signal transduction system that modulates chemotaxis in response to various stimuli. Catalyzes the demethylation of specific methylglutamate residues introduced into the chemoreceptors (methyl-accepting chemotaxis proteins or MCP) by CheR. Also mediates the irreversible deamidation of specific glutamine residues to glutamic acid. The sequence is that of Protein-glutamate methylesterase/protein-glutamine glutaminase 1 from Vibrio vulnificus (strain YJ016).